Reading from the N-terminus, the 119-residue chain is Small ribosomal subunit protein uS13m (119 aa).

It belongs to the universal ribosomal protein uS13 family. Part of the small ribosomal subunit.

It is found in the mitochondrion. Located at the top of the head of the small subunit, it contacts several helices of the small subunit rRNA. The polypeptide is Small ribosomal subunit protein uS13m (RPS13) (Prototheca wickerhamii).